A 416-amino-acid polypeptide reads, in one-letter code: POC1 centriolar protein homolog A (416 aa).

WD repeat units follow at residues 16-55, 58-97, 100-139, 142-181, 184-223, 226-265, and 268-307; these read GHRD…RAYR, GHKD…ESVL, AHTG…IICT, EHNN…LIHT, EPGG…LLQH, VHSA…LLYT, and GHQG…VDYS. The tract at residues 311-340 is disordered; sequence QQKRDHRTPSAQASGAAGDPESRSGQKTEV. Positions 380–412 form a coiled coil; sequence QLDVLTQTVAILEQRLTLTEDKLKECLEQQHQA.

It belongs to the WD repeat POC1 family.

Functionally, may play an important role in centriole assembly and/or stability and ciliogenesis. The polypeptide is POC1 centriolar protein homolog A (Danio rerio (Zebrafish)).